A 405-amino-acid chain; its full sequence is Probable tRNA sulfurtransferase (405 aa).

In terms of domain architecture, THUMP spans 60–165; the sequence is DKVMGRLKLV…LNGIFLSSET (106 aa). Residues 183-184, 208-209, Arg265, Gly287, and Gln296 contribute to the ATP site; these read ML and HF.

It belongs to the ThiI family.

Its subcellular location is the cytoplasm. It catalyses the reaction [ThiI sulfur-carrier protein]-S-sulfanyl-L-cysteine + a uridine in tRNA + 2 reduced [2Fe-2S]-[ferredoxin] + ATP + H(+) = [ThiI sulfur-carrier protein]-L-cysteine + a 4-thiouridine in tRNA + 2 oxidized [2Fe-2S]-[ferredoxin] + AMP + diphosphate. The enzyme catalyses [ThiS sulfur-carrier protein]-C-terminal Gly-Gly-AMP + S-sulfanyl-L-cysteinyl-[cysteine desulfurase] + AH2 = [ThiS sulfur-carrier protein]-C-terminal-Gly-aminoethanethioate + L-cysteinyl-[cysteine desulfurase] + A + AMP + 2 H(+). The protein operates within cofactor biosynthesis; thiamine diphosphate biosynthesis. Its function is as follows. Catalyzes the ATP-dependent transfer of a sulfur to tRNA to produce 4-thiouridine in position 8 of tRNAs, which functions as a near-UV photosensor. Also catalyzes the transfer of sulfur to the sulfur carrier protein ThiS, forming ThiS-thiocarboxylate. This is a step in the synthesis of thiazole, in the thiamine biosynthesis pathway. The sulfur is donated as persulfide by IscS. The sequence is that of Probable tRNA sulfurtransferase from Lactiplantibacillus plantarum (strain ATCC BAA-793 / NCIMB 8826 / WCFS1) (Lactobacillus plantarum).